The sequence spans 299 residues: Ribosome-inactivating protein saporin-6 (299 aa).

An N-terminal signal peptide occupies residues 1 to 24; the sequence is MKIYVVATIAWILLQFSAWTTTDA. E200 is an active-site residue. Positions 278-299 are excised as a propeptide; sequence SSNEANSTVRHYGPLKPTLLIT. N-linked (GlcNAc...) asparagine glycosylation is present at N283.

The protein belongs to the ribosome-inactivating protein family. Type 1 RIP subfamily. In terms of tissue distribution, seeds and leaves of the plant.

The enzyme catalyses Endohydrolysis of the N-glycosidic bond at one specific adenosine on the 28S rRNA.. Its function is as follows. Ribosome-inactivating protein of type 1, inhibits protein synthesis in animal cells. Useful as immunotoxin for pharmacological applications. The protein is Ribosome-inactivating protein saporin-6 (SAP6) of Saponaria officinalis (Common soapwort).